A 358-amino-acid polypeptide reads, in one-letter code: Glutamate--cysteine ligase (358 aa).

The protein belongs to the glutamate--cysteine ligase type 2 family. YbdK subfamily.

The enzyme catalyses L-cysteine + L-glutamate + ATP = gamma-L-glutamyl-L-cysteine + ADP + phosphate + H(+). Its function is as follows. Catalyzes the synthesis of gamma-glutamylcysteine (gamma-GC), the main low-molecular-weight thiol compound instead of glutathione in halophilic archaea. The polypeptide is Glutamate--cysteine ligase (Haloferax volcanii (strain ATCC 29605 / DSM 3757 / JCM 8879 / NBRC 14742 / NCIMB 2012 / VKM B-1768 / DS2) (Halobacterium volcanii)).